The chain runs to 284 residues: 2-dehydro-3-deoxyphosphooctonate aldolase (284 aa).

It belongs to the KdsA family.

Its subcellular location is the cytoplasm. It carries out the reaction D-arabinose 5-phosphate + phosphoenolpyruvate + H2O = 3-deoxy-alpha-D-manno-2-octulosonate-8-phosphate + phosphate. It participates in carbohydrate biosynthesis; 3-deoxy-D-manno-octulosonate biosynthesis; 3-deoxy-D-manno-octulosonate from D-ribulose 5-phosphate: step 2/3. Its pathway is bacterial outer membrane biogenesis; lipopolysaccharide biosynthesis. This is 2-dehydro-3-deoxyphosphooctonate aldolase from Bordetella petrii (strain ATCC BAA-461 / DSM 12804 / CCUG 43448).